The following is a 425-amino-acid chain: Putative integrase/recombinase y4rF (425 aa).

The Core-binding (CB) domain maps to 123-210 (DPDALLLASF…HIRTFLRFLC (88 aa)). The Tyr recombinase domain occupies 233-418 (HLPPRLAWGD…AASQLAEVAL (186 aa)). Residues R273, K298, H370, R373, and H396 contribute to the active site. The active-site O-(3'-phospho-DNA)-tyrosine intermediate is Y405.

It belongs to the 'phage' integrase family.

This chain is Putative integrase/recombinase y4rF, found in Sinorhizobium fredii (strain NBRC 101917 / NGR234).